A 201-amino-acid chain; its full sequence is Probable nicotinate-nucleotide adenylyltransferase (201 aa).

The protein belongs to the NadD family.

The enzyme catalyses nicotinate beta-D-ribonucleotide + ATP + H(+) = deamido-NAD(+) + diphosphate. The protein operates within cofactor biosynthesis; NAD(+) biosynthesis; deamido-NAD(+) from nicotinate D-ribonucleotide: step 1/1. In terms of biological role, catalyzes the reversible adenylation of nicotinate mononucleotide (NaMN) to nicotinic acid adenine dinucleotide (NaAD). The polypeptide is Probable nicotinate-nucleotide adenylyltransferase (Clostridium botulinum (strain ATCC 19397 / Type A)).